The chain runs to 430 residues: Neuropeptide FF receptor 1 (430 aa).

Positions 1–20 are disordered; it reads MEGEPSQPPNSSWPLSQNGT. The Extracellular portion of the chain corresponds to 1 to 43; it reads MEGEPSQPPNSSWPLSQNGTNTEATPATNLTFSSYYQHTSPVA. Polar residues predominate over residues 9–20; it reads PNSSWPLSQNGT. N-linked (GlcNAc...) asparagine glycans are attached at residues Asn10, Asn18, and Asn29. A helical membrane pass occupies residues 44–64; that stretch reads AMFIVAYALIFLLCMVGNTLV. The Cytoplasmic portion of the chain corresponds to 65–80; sequence CFIVLKNRHMHTVTNM. A helical membrane pass occupies residues 81 to 101; sequence FILNLAVSDLLVGIFCMPTTL. At 102–117 the chain is on the extracellular side; that stretch reads VDNLITGWPFDNATCK. A glycan (N-linked (GlcNAc...) asparagine) is linked at Asn113. Cys116 and Cys203 are disulfide-bonded. Residues 118–138 traverse the membrane as a helical segment; the sequence is MSGLVQGMSVSASVFTLVAIA. Topologically, residues 139–158 are cytoplasmic; that stretch reads VERFRCIVHPFREKLTLRKA. Residues 159–179 form a helical membrane-spanning segment; that stretch reads LVTIAVIWALALLIMCPSAVT. Over 180–214 the chain is Extracellular; the sequence is LTVTREEHHFMVDARNRSYPLYSCWEAWPEKGMRR. The N-linked (GlcNAc...) asparagine glycan is linked to Asn195. The chain crosses the membrane as a helical span at residues 215–235; the sequence is VYTTVLFSHIYLAPLALIVVM. Over 236 to 271 the chain is Cytoplasmic; the sequence is YARIARKLCQAPGPAPGGEEAADPRASRRRARVVHM. A helical transmembrane segment spans residues 272–292; it reads LVMVALFFTLSWLPLWALLLL. The Extracellular segment spans residues 293–307; sequence IDYGQLSAPQLHLVT. Residues 308–328 form a helical membrane-spanning segment; the sequence is VYAFPFAHWLAFFNSSANPII. At 329 to 430 the chain is on the cytoplasmic side; the sequence is YGYFNENFRR…LPLTIPAWDI (102 aa). Residues 379–404 are compositionally biased toward low complexity; sequence SDSGLPSESGPSSGAPRPGRLPLRNG. The disordered stretch occupies residues 379–413; the sequence is SDSGLPSESGPSSGAPRPGRLPLRNGRVAHHGLPR.

This sequence belongs to the G-protein coupled receptor 1 family.

The protein localises to the cell membrane. In terms of biological role, receptor for NPAF (A-18-F-amide) and NPFF (F-8-F-amide) neuropeptides, also known as morphine-modulating peptides. Can also be activated by a variety of naturally occurring or synthetic FMRF-amide like ligands. This receptor mediates its action by association with G proteins that activate a phosphatidylinositol-calcium second messenger system. The sequence is that of Neuropeptide FF receptor 1 from Homo sapiens (Human).